A 551-amino-acid polypeptide reads, in one-letter code: Alkaline nuclease (551 aa).

This sequence belongs to the herpesviridae alkaline nuclease family. As to quaternary structure, interacts with major DNA-binding protein; this interaction increases the nuclease processivity of the alkaline exonuclease.

The protein resides in the host nucleus. Its subcellular location is the host cytoplasm. Its function is as follows. Plays a role in processing non linear or branched viral DNA intermediates in order to promote the production of mature packaged unit-length linear progeny viral DNA molecules. Exhibits endonuclease and exonuclease activities and accepts both double-stranded and single-stranded DNA as substrate. Exonuclease digestion of DNA is in the 5'-&gt; 3' direction and the products are 5'-monophosphate nucleosides. Additionally, forms a recombinase with the major DNA-binding protein, which displays strand exchange activity. This chain is Alkaline nuclease, found in Homo sapiens (Human).